The primary structure comprises 355 residues: UDP-N-acetylglucosamine--N-acetylmuramyl-(pentapeptide) pyrophosphoryl-undecaprenol N-acetylglucosamine transferase (355 aa).

UDP-N-acetyl-alpha-D-glucosamine is bound by residues 14–16 (TGG), asparagine 126, arginine 162, serine 190, isoleucine 243, 262–267 (ALTVSE), and glutamine 287.

Belongs to the glycosyltransferase 28 family. MurG subfamily.

Its subcellular location is the cell inner membrane. It catalyses the reaction di-trans,octa-cis-undecaprenyl diphospho-N-acetyl-alpha-D-muramoyl-L-alanyl-D-glutamyl-meso-2,6-diaminopimeloyl-D-alanyl-D-alanine + UDP-N-acetyl-alpha-D-glucosamine = di-trans,octa-cis-undecaprenyl diphospho-[N-acetyl-alpha-D-glucosaminyl-(1-&gt;4)]-N-acetyl-alpha-D-muramoyl-L-alanyl-D-glutamyl-meso-2,6-diaminopimeloyl-D-alanyl-D-alanine + UDP + H(+). It functions in the pathway cell wall biogenesis; peptidoglycan biosynthesis. Cell wall formation. Catalyzes the transfer of a GlcNAc subunit on undecaprenyl-pyrophosphoryl-MurNAc-pentapeptide (lipid intermediate I) to form undecaprenyl-pyrophosphoryl-MurNAc-(pentapeptide)GlcNAc (lipid intermediate II). This chain is UDP-N-acetylglucosamine--N-acetylmuramyl-(pentapeptide) pyrophosphoryl-undecaprenol N-acetylglucosamine transferase, found in Vibrio vulnificus (strain YJ016).